A 177-amino-acid chain; its full sequence is Pyruvate synthase subunit PorC (177 aa).

As to quaternary structure, heterotetramer of one alpha, one beta, one delta and one gamma chain.

The catalysed reaction is 2 oxidized [2Fe-2S]-[ferredoxin] + pyruvate + CoA = 2 reduced [2Fe-2S]-[ferredoxin] + acetyl-CoA + CO2 + H(+). This chain is Pyruvate synthase subunit PorC (porC), found in Methanothermobacter marburgensis (strain ATCC BAA-927 / DSM 2133 / JCM 14651 / NBRC 100331 / OCM 82 / Marburg) (Methanobacterium thermoautotrophicum).